We begin with the raw amino-acid sequence, 328 residues long: LOB domain-containing protein 27 (328 aa).

Residues 35–136 (GACAACKYQR…EELKAVNSQL (102 aa)) enclose the LOB domain.

Belongs to the LOB domain-containing protein family.

The sequence is that of LOB domain-containing protein 27 (LBD27) from Arabidopsis thaliana (Mouse-ear cress).